The primary structure comprises 333 residues: MSCMKEQLIINILKDEHAPAQNKITVVGVGAVGMACAMSILMKDLADELALVDVIEDKLKGEMMDLQHGSLFLRTPKIVSGKDYSVTANSKLVIVTAGARQQEGESRLNLVQRNVNIFKFIIPNVVKYSPDATLLVVSNPVDVLTYVAWKISGFPKHRVIGSGCNLDSARFRYLMGEKLGVHAQSCHGWVVGEHGDSSVPVWSGVNVAGVSLQTLNPELGTDADKENWKEVHKQVVESAYEVIKLKGYTSWAIGLSVADLAETIMKNLRRVHPVSTKVKGLYGVHEDVFLSVPCVLGNQGITDVVKMTLKPEEEDRLRKSSDTLWGIQKELHF.

NAD(+)-binding positions include 30-58 (GAVGMACAMSILMKDLADELALVDVIEDK) and arginine 100. Substrate-binding residues include arginine 107, asparagine 139, and arginine 170. Asparagine 139 lines the NAD(+) pocket. Histidine 194 (proton acceptor) is an active-site residue. Threonine 249 serves as a coordination point for substrate.

Belongs to the LDH/MDH superfamily. LDH family. Homotetramer.

The protein resides in the cytoplasm. It catalyses the reaction (S)-lactate + NAD(+) = pyruvate + NADH + H(+). It functions in the pathway fermentation; pyruvate fermentation to lactate; (S)-lactate from pyruvate: step 1/1. Interconverts simultaneously and stereospecifically pyruvate and lactate with concomitant interconversion of NADH and NAD(+). This is L-lactate dehydrogenase A chain (LDHA) from Ambystoma mexicanum (Axolotl).